The primary structure comprises 380 residues: Queuine tRNA-ribosyltransferase (380 aa).

The active-site Proton acceptor is Asp-96. Substrate is bound by residues 96-100, Asp-150, Gln-193, and Gly-220; that span reads DSGGF. Positions 251 to 257 are RNA binding; it reads GVGAPDS. Asp-270 (nucleophile) is an active-site residue. The interval 275–279 is RNA binding; important for wobble base 34 recognition; that stretch reads TRIAR. Zn(2+) is bound by residues Cys-308, Cys-310, Cys-313, and His-339.

It belongs to the queuine tRNA-ribosyltransferase family. As to quaternary structure, homodimer. Within each dimer, one monomer is responsible for RNA recognition and catalysis, while the other monomer binds to the replacement base PreQ1. It depends on Zn(2+) as a cofactor.

It catalyses the reaction 7-aminomethyl-7-carbaguanine + guanosine(34) in tRNA = 7-aminomethyl-7-carbaguanosine(34) in tRNA + guanine. The protein operates within tRNA modification; tRNA-queuosine biosynthesis. In terms of biological role, catalyzes the base-exchange of a guanine (G) residue with the queuine precursor 7-aminomethyl-7-deazaguanine (PreQ1) at position 34 (anticodon wobble position) in tRNAs with GU(N) anticodons (tRNA-Asp, -Asn, -His and -Tyr). Catalysis occurs through a double-displacement mechanism. The nucleophile active site attacks the C1' of nucleotide 34 to detach the guanine base from the RNA, forming a covalent enzyme-RNA intermediate. The proton acceptor active site deprotonates the incoming PreQ1, allowing a nucleophilic attack on the C1' of the ribose to form the product. After dissociation, two additional enzymatic reactions on the tRNA convert PreQ1 to queuine (Q), resulting in the hypermodified nucleoside queuosine (7-(((4,5-cis-dihydroxy-2-cyclopenten-1-yl)amino)methyl)-7-deazaguanosine). In Streptococcus pyogenes serotype M49 (strain NZ131), this protein is Queuine tRNA-ribosyltransferase.